The primary structure comprises 447 residues: RNA-binding protein 208 (447 aa).

2 RRM domains span residues 73–147 and 158–236; these read RSVY…WAYA and FHIF…WATK. Residues 254–269 show a composition bias toward polar residues; it reads TNGSSSNPGMEASQDT. Disordered regions lie at residues 254–279 and 353–372; these read TNGS…ENNP and WGNK…PPLP. The 75-residue stretch at 282–356 folds into the RRM 3 domain; sequence TTVYVGNLGH…KPIKCSWGNK (75 aa).

As to quaternary structure, interacts with RBP-P.

Its function is as follows. RNA-binding protein. The chain is RNA-binding protein 208 from Oryza sativa subsp. japonica (Rice).